Reading from the N-terminus, the 218-residue chain is Large ribosomal subunit protein uL3 (218 aa).

The tract at residues 127–167 is disordered; the sequence is GFSRGPMSHGSKNHRLPGSIGAGTTPGRVYPGKRMAGRMGG.

Belongs to the universal ribosomal protein uL3 family. Part of the 50S ribosomal subunit. Forms a cluster with proteins L14 and L19.

Functionally, one of the primary rRNA binding proteins, it binds directly near the 3'-end of the 23S rRNA, where it nucleates assembly of the 50S subunit. The polypeptide is Large ribosomal subunit protein uL3 (Prochlorococcus marinus (strain NATL1A)).